A 443-amino-acid polypeptide reads, in one-letter code: Threonine/serine transporter TdcC (443 aa).

11 helical membrane passes run 22–42 (TTWT…FFPI), 44–64 (AGFG…PIAF), 97–117 (GVVI…IYGV), 140–160 (FVAL…KDLM), 163–183 (VMSY…LSLI), 207–227 (ILIT…FSPI), 261–281 (MLMV…LSPA), 312–332 (AITL…KSFF), 366–386 (ISMI…PNIL), 389–409 (IEAM…MYAI), and 423–443 (DNVF…YKLF).

Belongs to the amino acid/polyamine transporter 2 family. SdaC/TdcC subfamily.

It localises to the cell inner membrane. The catalysed reaction is L-threonine(in) + H(+)(in) = L-threonine(out) + H(+)(out). It catalyses the reaction L-serine(in) + H(+)(in) = L-serine(out) + H(+)(out). In terms of biological role, involved in the import of threonine and serine into the cell, with the concomitant import of a proton (symport system). The polypeptide is Threonine/serine transporter TdcC (Escherichia coli O45:K1 (strain S88 / ExPEC)).